Consider the following 55-residue polypeptide: Large ribosomal subunit protein bL33 (55 aa).

It belongs to the bacterial ribosomal protein bL33 family.

In Dinoroseobacter shibae (strain DSM 16493 / NCIMB 14021 / DFL 12), this protein is Large ribosomal subunit protein bL33.